A 495-amino-acid chain; its full sequence is Flagellin (495 aa).

The protein belongs to the bacterial flagellin family.

Its subcellular location is the secreted. It is found in the bacterial flagellum. Its function is as follows. Flagellin is the subunit protein which polymerizes to form the filaments of bacterial flagella. This chain is Flagellin (fliC), found in Salmonella typhimurium (strain LT2 / SGSC1412 / ATCC 700720).